A 189-amino-acid polypeptide reads, in one-letter code: Recombination protein RecR (189 aa).

The C4-type zinc finger occupies 48-63; the sequence is CQTCFHLSAEPTCEIC. One can recognise a Toprim domain in the interval 71–165; that stretch reads GMLCVVADSR…EVSRIAYGLP (95 aa).

It belongs to the RecR family.

May play a role in DNA repair. It seems to be involved in an RecBC-independent recombinational process of DNA repair. It may act with RecF and RecO. This is Recombination protein RecR from Synechococcus sp. (strain CC9311).